Reading from the N-terminus, the 304-residue chain is Tetrahydromethanopterin S-methyltransferase subunit E (304 aa).

A run of 6 helical transmembrane segments spans residues 3–23 (PLIGMGVLALIGVAATIAGAS), 86–106 (PLFALVLGALIAACVHGTFAV), 131–151 (HTPVIMGYSFITTFCILVVSY), 152–172 (LMTVVLGHPFPLTMLAFIWGI), 233–253 (PVTGMAFGMTVFLGSWVTTVF), and 263–283 (WISVVAGVIIVLILIFWNWKI).

The protein belongs to the MtrE family. In terms of assembly, the complex is composed of 8 subunits; MtrA, MtrB, MtrC, MtrD, MtrE, MtrF, MtrG and MtrH.

The protein resides in the cell membrane. The catalysed reaction is 5-methyl-5,6,7,8-tetrahydromethanopterin + coenzyme M + 2 Na(+)(in) = 5,6,7,8-tetrahydromethanopterin + methyl-coenzyme M + 2 Na(+)(out). Its pathway is one-carbon metabolism; methanogenesis from CO(2); methyl-coenzyme M from 5,10-methylene-5,6,7,8-tetrahydromethanopterin: step 2/2. Functionally, part of a complex that catalyzes the formation of methyl-coenzyme M and tetrahydromethanopterin from coenzyme M and methyl-tetrahydromethanopterin. This is an energy-conserving, sodium-ion translocating step. In Methanosarcina acetivorans (strain ATCC 35395 / DSM 2834 / JCM 12185 / C2A), this protein is Tetrahydromethanopterin S-methyltransferase subunit E.